The sequence spans 356 residues: Probable cinnamyl alcohol dehydrogenase (356 aa).

Cys-47 is a binding site for Zn(2+). Residue Ser-49 participates in NADP(+) binding. Zn(2+) contacts are provided by His-69, Glu-70, Cys-100, Cys-103, Cys-106, Cys-114, and Cys-163. Residues Thr-167, 188-193, 211-216, Thr-251, Gly-275, and 298-300 each bind NADP(+); these read GLGGVG, SSSDKK, and SFI.

Belongs to the zinc-containing alcohol dehydrogenase family. As to quaternary structure, homodimer. Zn(2+) is required as a cofactor.

The enzyme catalyses (E)-cinnamyl alcohol + NADP(+) = (E)-cinnamaldehyde + NADPH + H(+). The catalysed reaction is (E)-coniferol + NADP(+) = (E)-coniferaldehyde + NADPH + H(+). It catalyses the reaction (E)-sinapyl alcohol + NADP(+) = (E)-sinapaldehyde + NADPH + H(+). It carries out the reaction (E)-4-coumaroyl alcohol + NADP(+) = (E)-4-coumaraldehyde + NADPH + H(+). The enzyme catalyses (E)-caffeyl alcohol + NADP(+) = (E)-caffeyl aldehyde + NADPH + H(+). It functions in the pathway aromatic compound metabolism; phenylpropanoid biosynthesis. In terms of biological role, involved in lignin biosynthesis. Catalyzes the final step specific for the production of lignin monomers. Catalyzes the NADPH-dependent reduction of coniferaldehyde, 5-hydroxyconiferaldehyde, sinapaldehyde, 4-coumaraldehyde and caffeyl aldehyde to their respective alcohols. This Eucalyptus globulus (Tasmanian blue gum) protein is Probable cinnamyl alcohol dehydrogenase (CAD).